A 123-amino-acid chain; its full sequence is Protein Wnt-7b (123 aa).

S1 is lipidated: O-palmitoleoyl serine; by PORCN. Residues 33–61 (VEAVRATRLRQPTFLKIKKPRTYRKPMVT) are disordered linker. C89 and C104 form a disulfide bridge. The N-linked (GlcNAc...) asparagine glycan is linked to N90.

The protein belongs to the Wnt family. Palmitoleoylation is required for efficient binding to frizzled receptors. Depalmitoleoylation leads to Wnt signaling pathway inhibition.

It is found in the secreted. It localises to the extracellular space. The protein localises to the extracellular matrix. Functionally, ligand for members of the frizzled family of seven transmembrane receptors that functions in the canonical Wnt/beta-catenin signaling pathway. Required for normal fusion of the chorion and the allantois during placenta development. Required for central nervous system (CNS) angiogenesis and blood-brain barrier regulation. The sequence is that of Protein Wnt-7b (WNT-7B) from Alopias vulpinus (Common thresher shark).